Here is a 141-residue protein sequence, read N- to C-terminus: Hemoglobin subunit alpha (141 aa).

In terms of domain architecture, Globin spans Val1–Arg141. Residue Ser3 is modified to Phosphoserine. Lys7 carries the N6-succinyllysine modification. At Thr8 the chain carries Phosphothreonine. Lys11 carries the N6-succinyllysine modification. Lys16 is modified (N6-acetyllysine; alternate). At Lys16 the chain carries N6-succinyllysine; alternate. A Phosphotyrosine modification is found at Tyr24. Phosphoserine is present on Ser35. Lys40 carries the N6-succinyllysine modification. Ser49 is subject to Phosphoserine. His58 is an O2 binding site. Residue His87 participates in heme b binding. Ser102 carries the phosphoserine modification. Phosphothreonine is present on Thr108. At Ser124 the chain carries Phosphoserine. Phosphothreonine is present on residues Thr134 and Thr137. The residue at position 138 (Ser138) is a Phosphoserine.

This sequence belongs to the globin family. In terms of assembly, heterotetramer of two alpha chains and two beta chains. Red blood cells.

Functionally, involved in oxygen transport from the lung to the various peripheral tissues. The chain is Hemoglobin subunit alpha from Blarina brevicauda (Northern short-tailed shrew).